The following is a 617-amino-acid chain: V-type proton ATPase catalytic subunit A (617 aa).

Residue threonine 136 is modified to Phosphothreonine. Residue 250–257 (GAFGCGKT) participates in ATP binding. Serine 384 is subject to Phosphoserine; by AMPK.

The protein belongs to the ATPase alpha/beta chains family. V-ATPase is a heteromultimeric enzyme made up of two complexes: the ATP-hydrolytic V1 complex and the proton translocation V0 complex. The V1 complex consists of three catalytic AB heterodimers that form a heterohexamer, three peripheral stalks each consisting of EG heterodimers, one central rotor including subunits D and F, and the regulatory subunits C and H. The proton translocation complex V0 consists of the proton transport subunit a, a ring of proteolipid subunits c9c'', rotary subunit d, subunits e and f, and the accessory subunits ATP6AP1/Ac45 and ATP6AP2/PRR. Interacts with the V0 complex V-ATPase subunit a4 ATP6V0A4. Interacts with WFS1. Interacts with alpha-crystallin B chain/CRYAB and with MTOR, forming a ternary complex. In terms of processing, phosphorylation at Ser-384 by AMPK down-regulates its enzyme activity. Expressed in brain (at protein level).

The protein resides in the cytoplasm. The protein localises to the cytosol. Its subcellular location is the cytoplasmic vesicle. It localises to the secretory vesicle. It is found in the clathrin-coated vesicle membrane. The protein resides in the lysosome. The catalysed reaction is ATP + H2O + 4 H(+)(in) = ADP + phosphate + 5 H(+)(out). ATP hydrolysis occurs at the interface between the nucleotide-binding domains of subunits A and B. ATP hydrolysis triggers a conformational change in the subunits D and F, which induces a shift of subunit d. The c-ring is subsequently rotated and results in a continuous proton translocation across the membrane. The V-ATPase is inhibited by bafilomycin A. In terms of biological role, catalytic subunit of the V1 complex of vacuolar(H+)-ATPase (V-ATPase), a multisubunit enzyme composed of a peripheral complex (V1) that hydrolyzes ATP and a membrane integral complex (V0) that translocates protons. V-ATPase is responsible for acidifying and maintaining the pH of intracellular compartments and in some cell types, is targeted to the plasma membrane, where it is responsible for acidifying the extracellular environment. In aerobic conditions, involved in intracellular iron homeostasis, thus triggering the activity of Fe(2+) prolyl hydroxylase (PHD) enzymes, and leading to HIF1A hydroxylation and subsequent proteasomal degradation. May play a role in neurite development and synaptic connectivity. This is V-type proton ATPase catalytic subunit A (ATP6V1A) from Bos taurus (Bovine).